We begin with the raw amino-acid sequence, 860 residues long: Transforming growth factor-beta receptor-associated protein 1 (860 aa).

The 274-residue stretch at 24 to 297 folds into the CNH domain; the sequence is RVNIECVECC…HILQDFEGRV (274 aa). One copy of the CHCR repeat lies at 564–728; sequence RPLDEQQKNS…LLAIYLHAGP (165 aa).

This sequence belongs to the TRAP1 family. Interacts with TGFBR2 and ACVR2B; in the absence of ligand stimulation. Interacts with TGFBR1, ACVRL1, BMPR1A and ACVR1B; in the absence of ligand stimulation and to a less extent. Interacts with SMAD4; the interaction seems to be mutually exclusive with the interaction of SMAD4 and phosphorylated SMAD2. May interact with ALOX5. Interacts with RAB5C. Interacts with VPS8, VPS11 and VPS16. Component of the putative class C core vacuole/endosome tethering (CORVET) complex; the core of which composed of the class C Vps proteins VPS11, VPS16, VPS18 and VPS33A, is associated with VPS8 and TGFBRAP1.

It is found in the cytoplasm. The protein localises to the early endosome. Plays a role in the TGF-beta/activin signaling pathway. It associates with inactive heteromeric TGF-beta and activin receptor complexes, mainly through the type II receptor, and is released upon activation of signaling. May recruit SMAD4 to the vicinity of the receptor complex and facilitate its interaction with receptor-regulated Smads, such as SMAD2. Functionally, plays a role in vesicle-mediated protein trafficking of the endocytic membrane transport pathway. Believed to act as a component of the putative CORVET endosomal tethering complexes which is proposed to be involved in the Rab5-to-Rab7 endosome conversion probably implicating MON1A/B, and via binding SNAREs and SNARE complexes to mediate tethering and docking events during SNARE-mediated membrane fusion. The CORVET complex is proposed to function as a Rab5 effector to mediate early endosome fusion probably in specific endosome subpopulations. Functions predominantly in APPL1-containing endosomes and in degradative but not recycling trafficking of endocytosed cargo. This chain is Transforming growth factor-beta receptor-associated protein 1 (TGFBRAP1), found in Homo sapiens (Human).